Reading from the N-terminus, the 209-residue chain is Large ribosomal subunit protein bL25 (209 aa).

Belongs to the bacterial ribosomal protein bL25 family. CTC subfamily. As to quaternary structure, part of the 50S ribosomal subunit; part of the 5S rRNA/L5/L18/L25 subcomplex. Contacts the 5S rRNA. Binds to the 5S rRNA independently of L5 and L18.

This is one of the proteins that binds to the 5S RNA in the ribosome where it forms part of the central protuberance. In Xanthomonas campestris pv. campestris (strain 8004), this protein is Large ribosomal subunit protein bL25.